We begin with the raw amino-acid sequence, 127 residues long: RxLR effector protein CRE6 (127 aa).

The signal sequence occupies residues 1 to 19 (MIRNALLVLVFVLIGTISA). The short motif at 48–67 (RLLRQGSVKEGGVHDATEER) is the RxLR-dEER element.

It belongs to the RxLR effector family.

The protein resides in the secreted. It localises to the host cell. Effector that is involved in host plant infection. Contributes to virulence during the early infection stage, by inhibiting plant defense responses induced by both PAMP-triggered immunity (PTI) and effector-triggered immunity (ETI). This is RxLR effector protein CRE6 from Phytophthora infestans (strain T30-4) (Potato late blight agent).